Here is a 392-residue protein sequence, read N- to C-terminus: Peptidoglycan hydrolase PcsB (392 aa).

Residues 1–27 (MKKKILASLLLSTVMVSQVAVLTTAHA) form the signal peptide. Coiled coils occupy residues 34 to 96 (IAAQ…LSKN) and 191 to 227 (TKQA…AEAE). Residues 47–267 (QQQEAQKQVD…TAQVQAVSES (221 aa)) are interacts with large extracellular loop of FtsX. In terms of domain architecture, Peptidase C51 spans 267 to 390 (SAAAPVRAKV…TSEGFVTYIY (124 aa)).

In terms of assembly, homodimer. Interacts (via N-terminal coiled coil domain) with FtsX (via large extracellular loop). This interaction directs PcsB to equatorial and septal sites of dividing cells. Interacts with FtsE.

The protein resides in the cell membrane. The protein localises to the cell septum. Its subcellular location is the secreted. With respect to regulation, lacks peptidoglycan-hydrolase activity in vitro, probably due to auto-inhibition by the CC domain. In the homodimer, interaction between the CC domain in one monomer and the hydrolase active site in the peptidase C51/CHAP domain in the other monomer probably mediates auto-inhibition of the hydrolase activity. Functionally, peptidoglycan-hydrolase activity. Required in maintaining normal growth and cellular morphology. Involved in splitting of the septum during cell division. This chain is Peptidoglycan hydrolase PcsB, found in Streptococcus pneumoniae serotype 2 (strain D39 / NCTC 7466).